We begin with the raw amino-acid sequence, 236 residues long: MKIIPAIDLMDGQVVRLYKGDPKQKTVYSDDPVSVAKKWQKAGADMLHIVDLDATIGTGSNLDLIEKISKELSIPVEVAGGLRNEEIIDRAISFSNRVVIGTMAFKDKEMLQRIAKKYDFSKIVISVDHIDGFIVTHGWQESTKTPLLDAINEFVSMGFTEFLLTNVSKDGTLEGPDLEYLEKACAVQNANVIASGGISNIDDVSDVQRKNAFAVILGKALYENKISIEEAKQLVN.

The active-site Proton acceptor is the Asp-8. Asp-128 (proton donor) is an active-site residue.

The protein belongs to the HisA/HisF family.

It localises to the cytoplasm. It catalyses the reaction 1-(5-phospho-beta-D-ribosyl)-5-[(5-phospho-beta-D-ribosylamino)methylideneamino]imidazole-4-carboxamide = 5-[(5-phospho-1-deoxy-D-ribulos-1-ylimino)methylamino]-1-(5-phospho-beta-D-ribosyl)imidazole-4-carboxamide. The protein operates within amino-acid biosynthesis; L-histidine biosynthesis; L-histidine from 5-phospho-alpha-D-ribose 1-diphosphate: step 4/9. The chain is 1-(5-phosphoribosyl)-5-[(5-phosphoribosylamino)methylideneamino] imidazole-4-carboxamide isomerase from Nitrosopumilus maritimus (strain SCM1).